The following is a 258-amino-acid chain: Imidazole glycerol phosphate synthase subunit HisF (258 aa).

Active-site residues include D11 and D130.

The protein belongs to the HisA/HisF family. As to quaternary structure, heterodimer of HisH and HisF.

It localises to the cytoplasm. It carries out the reaction 5-[(5-phospho-1-deoxy-D-ribulos-1-ylimino)methylamino]-1-(5-phospho-beta-D-ribosyl)imidazole-4-carboxamide + L-glutamine = D-erythro-1-(imidazol-4-yl)glycerol 3-phosphate + 5-amino-1-(5-phospho-beta-D-ribosyl)imidazole-4-carboxamide + L-glutamate + H(+). Its pathway is amino-acid biosynthesis; L-histidine biosynthesis; L-histidine from 5-phospho-alpha-D-ribose 1-diphosphate: step 5/9. IGPS catalyzes the conversion of PRFAR and glutamine to IGP, AICAR and glutamate. The HisF subunit catalyzes the cyclization activity that produces IGP and AICAR from PRFAR using the ammonia provided by the HisH subunit. The polypeptide is Imidazole glycerol phosphate synthase subunit HisF (Methylorubrum extorquens (strain PA1) (Methylobacterium extorquens)).